We begin with the raw amino-acid sequence, 235 residues long: 1-(5-phosphoribosyl)-5-[(5-phosphoribosylamino)methylideneamino] imidazole-4-carboxamide isomerase (235 aa).

Residue Asp8 is the Proton acceptor of the active site. Residue Asp127 is the Proton donor of the active site.

It belongs to the HisA/HisF family.

Its subcellular location is the cytoplasm. It carries out the reaction 1-(5-phospho-beta-D-ribosyl)-5-[(5-phospho-beta-D-ribosylamino)methylideneamino]imidazole-4-carboxamide = 5-[(5-phospho-1-deoxy-D-ribulos-1-ylimino)methylamino]-1-(5-phospho-beta-D-ribosyl)imidazole-4-carboxamide. The protein operates within amino-acid biosynthesis; L-histidine biosynthesis; L-histidine from 5-phospho-alpha-D-ribose 1-diphosphate: step 4/9. This is 1-(5-phosphoribosyl)-5-[(5-phosphoribosylamino)methylideneamino] imidazole-4-carboxamide isomerase from Nautilia profundicola (strain ATCC BAA-1463 / DSM 18972 / AmH).